The sequence spans 162 residues: Novel acetylcholine receptor chaperone (162 aa).

At 1-5 (MASPR) the chain is on the cytoplasmic side. A helical membrane pass occupies residues 6–26 (TVTIVALSVTLGLFFVFMGTI). Residues 27 to 61 (KLTPRLSKDAYSEMKRAYKSYVKALPALKKIGISS) lie on the Lumenal side of the membrane. The helical transmembrane segment at 62-82 (VFLRKAIGSLELACGIVLTLV) threads the bilayer. The Cytoplasmic portion of the chain corresponds to 83–88 (PGRPKD). A helical membrane pass occupies residues 89–109 (VANFILLLLVLIVLFFHQLVG). Residues 110–114 (DPLKR) are Lumenal-facing. A helical membrane pass occupies residues 115 to 131 (YAHALVFGILLTCRLLV). Over 132–162 (SRQPEEEFPEKKLSRGNNGAHSREPIKMKVS) the chain is Cytoplasmic. The interval 141 to 162 (EKKLSRGNNGAHSREPIKMKVS) is disordered. Basic and acidic residues predominate over residues 152 to 162 (HSREPIKMKVS).

It belongs to the DoxX family.

The protein resides in the peroxisome membrane. It localises to the cytoplasmic vesicle. The protein localises to the endoplasmic reticulum membrane. Its function is as follows. Molecular chaperone which mediates the proper assembly and functional expression of the nicotinic acetylcholine receptors (nAChRs) throughout the brain. Essential for the proper folding, assembly, function and surface trafficking of alpha-7 (CHRNA7), alpha-4-beta-2, alpha-3-beta-2 and alpha-3-beta-4 receptors. This is Novel acetylcholine receptor chaperone (tmem35a) from Xenopus tropicalis (Western clawed frog).